We begin with the raw amino-acid sequence, 286 residues long: Shikimate dehydrogenase (NADP(+)) (286 aa).

Residues Thr-21–Ser-23 and Thr-68 each bind shikimate. The active-site Proton acceptor is Lys-72. Residue Asp-84 participates in NADP(+) binding. Asn-93 and Asp-108 together coordinate shikimate. NADP(+) is bound by residues Gly-132–Ala-136 and Leu-226. Shikimate is bound at residue Tyr-228. Position 249 (Gly-249) interacts with NADP(+).

The protein belongs to the shikimate dehydrogenase family. As to quaternary structure, homodimer.

It carries out the reaction shikimate + NADP(+) = 3-dehydroshikimate + NADPH + H(+). It participates in metabolic intermediate biosynthesis; chorismate biosynthesis; chorismate from D-erythrose 4-phosphate and phosphoenolpyruvate: step 4/7. In terms of biological role, involved in the biosynthesis of the chorismate, which leads to the biosynthesis of aromatic amino acids. Catalyzes the reversible NADPH linked reduction of 3-dehydroshikimate (DHSA) to yield shikimate (SA). This chain is Shikimate dehydrogenase (NADP(+)), found in Thermosynechococcus vestitus (strain NIES-2133 / IAM M-273 / BP-1).